We begin with the raw amino-acid sequence, 98 residues long: Integration host factor subunit alpha (98 aa).

The protein belongs to the bacterial histone-like protein family. Heterodimer of an alpha and a beta chain.

This protein is one of the two subunits of integration host factor, a specific DNA-binding protein that functions in genetic recombination as well as in transcriptional and translational control. The sequence is that of Integration host factor subunit alpha from Acinetobacter baumannii (strain AB307-0294).